A 482-amino-acid polypeptide reads, in one-letter code: Probable glycine dehydrogenase (decarboxylating) subunit 2 (482 aa).

Position 267 is an N6-(pyridoxal phosphate)lysine (lysine 267).

Belongs to the GcvP family. C-terminal subunit subfamily. The glycine cleavage system is composed of four proteins: P, T, L and H. In this organism, the P 'protein' is a heterodimer of two subunits. Pyridoxal 5'-phosphate serves as cofactor.

The catalysed reaction is N(6)-[(R)-lipoyl]-L-lysyl-[glycine-cleavage complex H protein] + glycine + H(+) = N(6)-[(R)-S(8)-aminomethyldihydrolipoyl]-L-lysyl-[glycine-cleavage complex H protein] + CO2. In terms of biological role, the glycine cleavage system catalyzes the degradation of glycine. The P protein binds the alpha-amino group of glycine through its pyridoxal phosphate cofactor; CO(2) is released and the remaining methylamine moiety is then transferred to the lipoamide cofactor of the H protein. This chain is Probable glycine dehydrogenase (decarboxylating) subunit 2, found in Aquifex aeolicus (strain VF5).